Reading from the N-terminus, the 197-residue chain is TM2 domain-containing protein 1 (197 aa).

Positions 1–32 are cleaved as a signal peptide; that stretch reads MAFRWRSLMRFRSTTRLLLLFTFCLTVIHSLG. Residues 33-105 lie on the Extracellular side of the membrane; it reads NDVDSCDKLH…GFNKTIPCRN (73 aa). Asn77, Asn84, Asn98, and Asn105 each carry an N-linked (GlcNAc...) asparagine glycan. A helical membrane pass occupies residues 106–126; that stretch reads VSGYSYKVAVALSLFLGWIGA. Positions 108–155 constitute a TM2 domain; that stretch reads GYSYKVAVALSLFLGWIGADRFYLGYPALGLLKFCTVGFCGIGSLVDF. Residues 127–143 lie on the Cytoplasmic side of the membrane; that stretch reads DRFYLGYPALGLLKFCT. A helical membrane pass occupies residues 144–164; sequence VGFCGIGSLVDFMLISMQIVG. Residues 165–197 lie on the Extracellular side of the membrane; it reads PSDGSDYIVDYYGARLTRLSITNETYRRMQPSP. A glycan (N-linked (GlcNAc...) asparagine) is linked at Asn187.

Belongs to the TM2 family.

It localises to the membrane. This chain is TM2 domain-containing protein 1 (tm2d1), found in Danio rerio (Zebrafish).